We begin with the raw amino-acid sequence, 107 residues long: Phosphoribosyl-ATP pyrophosphatase (107 aa).

This sequence belongs to the PRA-PH family.

Its subcellular location is the cytoplasm. It carries out the reaction 1-(5-phospho-beta-D-ribosyl)-ATP + H2O = 1-(5-phospho-beta-D-ribosyl)-5'-AMP + diphosphate + H(+). The protein operates within amino-acid biosynthesis; L-histidine biosynthesis; L-histidine from 5-phospho-alpha-D-ribose 1-diphosphate: step 2/9. This is Phosphoribosyl-ATP pyrophosphatase from Novosphingobium aromaticivorans (strain ATCC 700278 / DSM 12444 / CCUG 56034 / CIP 105152 / NBRC 16084 / F199).